We begin with the raw amino-acid sequence, 388 residues long: Na(+)/H(+) antiporter NhaA (388 aa).

Residues 1 to 11 (MKHLHRFFSSD) are Cytoplasmic-facing. A helical transmembrane segment spans residues 12–31 (ASGGIILIIAAILAMIMANS). Over 32 to 58 (GATSGWYHDFLETPVQLRVGSLEINKN) the chain is Periplasmic. The interval 45-58 (PVQLRVGSLEINKN) is important for dimerization. A helical membrane pass occupies residues 59–80 (MLLWINDALMAVFFLLVGLEVK). Residues 81–96 (RELMQGSLASLRQAAF) lie on the Cytoplasmic side of the membrane. The chain crosses the membrane as a helical span at residues 97 to 116 (PVIAAIGGMIVPALLYLAFN). At 117 to 122 (YADPIT) the chain is on the periplasmic side. The helical transmembrane segment at 123-130 (REGWAIPA) threads the bilayer. At 131–154 (ATDIAFALGVLALLGSRVPLALKI) the chain is on the cytoplasmic side. The helical transmembrane segment at 155-176 (FLMALAIIDDLGAIIIIALFYT) threads the bilayer. The Periplasmic portion of the chain corresponds to 177–180 (NDLS). A helical transmembrane segment spans residues 181-200 (MASLGVAAVAIAVLAVLNLC). Residues 201 to 204 (GARR) are Cytoplasmic-facing. Residues 205 to 222 (TGVYILVGVVLWTAVLKS) form a helical membrane-spanning segment. Position 223 (glycine 223) is a topological domain, periplasmic. A helical membrane pass occupies residues 224 to 236 (VHATLAGVIVGFF). Topologically, residues 237-253 (IPLKEKHGRSPAKRLEH) are cytoplasmic. Residues 254-272 (VLHPWVAYLILPLFAFANA) traverse the membrane as a helical segment. At 273-286 (GVSLQGVTLDGLTS) the chain is on the periplasmic side. A helical transmembrane segment spans residues 287-310 (ILPLGIIAGLLIGKPLGISLFCWL). Topologically, residues 311-339 (ALRLKLAHLPEGTTYQQIMVVGILCGIGF) are cytoplasmic. Residues 340–350 (TMSIFIASLAF) form a helical membrane-spanning segment. Over 351-357 (GSVDPEL) the chain is Periplasmic. Residues 358–380 (INWAKLGILVGSISSAVIGYSWL) traverse the membrane as a helical segment. Residues 381-388 (RVRLRPSV) are Cytoplasmic-facing.

This sequence belongs to the NhaA Na(+)/H(+) (TC 2.A.33) antiporter family. Monomer. Homodimer. Under routine stress conditions, the monomeric form is fully functional. However, the dimeric form is much more efficient in conferring growth resistance under extreme stress conditions.

The protein resides in the cell inner membrane. It catalyses the reaction Na(+)(in) + 2 H(+)(out) = Na(+)(out) + 2 H(+)(in). The catalysed reaction is Li(+)(in) + 2 H(+)(out) = Li(+)(out) + 2 H(+)(in). With respect to regulation, activity is regulated by pH. Active at alkaline pH. Activity is strongly down-regulated below pH 6.5 and a dramatic increase in activity is observed upon increase of the pH from 6.5 to 8.5. Its function is as follows. Na(+)/H(+) antiporter that extrudes sodium in exchange for external protons. Plays an important role in the regulation of intracellular pH, cellular Na(+) content and cell volume. Catalyzes the exchange of 2 H(+) per Na(+). This stoichiometry applies at both neutral and alkaline pH values. In addition, can also transport lithium and is involved in lithium detoxification. Binding of the Li(+) and H(+) ligands to NhaA is coupled and antagonistic. This chain is Na(+)/H(+) antiporter NhaA, found in Escherichia coli (strain K12).